The following is a 297-amino-acid chain: Ribosomal RNA small subunit methyltransferase A (297 aa).

Asparagine 31, leucine 33, glycine 58, glutamate 79, aspartate 104, and asparagine 129 together coordinate S-adenosyl-L-methionine.

This sequence belongs to the class I-like SAM-binding methyltransferase superfamily. rRNA adenine N(6)-methyltransferase family. RsmA subfamily.

It is found in the cytoplasm. The catalysed reaction is adenosine(1518)/adenosine(1519) in 16S rRNA + 4 S-adenosyl-L-methionine = N(6)-dimethyladenosine(1518)/N(6)-dimethyladenosine(1519) in 16S rRNA + 4 S-adenosyl-L-homocysteine + 4 H(+). Its function is as follows. Specifically dimethylates two adjacent adenosines (A1518 and A1519) in the loop of a conserved hairpin near the 3'-end of 16S rRNA in the 30S particle. May play a critical role in biogenesis of 30S subunits. This is Ribosomal RNA small subunit methyltransferase A from Staphylococcus aureus (strain bovine RF122 / ET3-1).